Reading from the N-terminus, the 1025-residue chain is Multidrug resistance protein MdtC (1025 aa).

12 helical membrane-spanning segments follow: residues 3-23, 333-353, 360-380, 387-407, 431-451, 463-483, 528-548, 853-873, 875-895, 897-917, 953-973, and 984-1004; these read FFAL…AITL, EVEQ…FLFL, IIPA…MYLC, LSLM…IVVL, VGFT…PLLL, FAVT…TLTP, LVGV…ISIP, VILI…LYES, VHPL…LLAL, LFNA…IGIV, PIMM…LSGG, and ITIV…TPVV.

This sequence belongs to the resistance-nodulation-cell division (RND) (TC 2.A.6) family. MdtC subfamily. Part of a tripartite efflux system composed of MdtA, MdtB and MdtC. MdtC forms a heteromultimer with MdtB.

It is found in the cell inner membrane. Functionally, the MdtABC tripartite complex confers resistance against novobiocin and deoxycholate. The polypeptide is Multidrug resistance protein MdtC (Escherichia coli (strain 55989 / EAEC)).